The following is a 373-amino-acid chain: tRNA-specific 2-thiouridylase MnmA (373 aa).

Residues 12-19 (GMSGGVDS) and Met38 each bind ATP. Residues 98–100 (NPD) form an interaction with target base in tRNA region. Cys103 acts as the Nucleophile in catalysis. A disulfide bridge links Cys103 with Cys200. Position 127 (Gly127) interacts with ATP. The tract at residues 150 to 152 (KDQ) is interaction with tRNA. Cys200 acts as the Cysteine persulfide intermediate in catalysis. The segment at 312–313 (RY) is interaction with tRNA.

Belongs to the MnmA/TRMU family.

The protein resides in the cytoplasm. It carries out the reaction S-sulfanyl-L-cysteinyl-[protein] + uridine(34) in tRNA + AH2 + ATP = 2-thiouridine(34) in tRNA + L-cysteinyl-[protein] + A + AMP + diphosphate + H(+). Its function is as follows. Catalyzes the 2-thiolation of uridine at the wobble position (U34) of tRNA, leading to the formation of s(2)U34. The chain is tRNA-specific 2-thiouridylase MnmA from Streptococcus pneumoniae (strain 70585).